The chain runs to 429 residues: Dihydroorotase (429 aa).

2 residues coordinate Zn(2+): histidine 61 and histidine 63. Substrate is bound by residues histidine 63–arginine 65 and asparagine 95. Residues aspartate 153, histidine 180, and histidine 233 each coordinate Zn(2+). Asparagine 279 is a binding site for substrate. Residue aspartate 306 participates in Zn(2+) binding. The active site involves aspartate 306. Substrate contacts are provided by residues histidine 310 and phenylalanine 324–glycine 325.

Belongs to the metallo-dependent hydrolases superfamily. DHOase family. Class I DHOase subfamily. It depends on Zn(2+) as a cofactor.

It carries out the reaction (S)-dihydroorotate + H2O = N-carbamoyl-L-aspartate + H(+). The protein operates within pyrimidine metabolism; UMP biosynthesis via de novo pathway; (S)-dihydroorotate from bicarbonate: step 3/3. Its function is as follows. Catalyzes the reversible cyclization of carbamoyl aspartate to dihydroorotate. The chain is Dihydroorotase from Ligilactobacillus salivarius (strain UCC118) (Lactobacillus salivarius).